A 671-amino-acid chain; its full sequence is Acetyl-coenzyme A synthetase 1 (671 aa).

Residues 210-213 (RGGK) and T329 each bind CoA. ATP-binding positions include 405–407 (GEP), 429–434 (DTYWQT), D520, and R535. Position 543 (S543) interacts with CoA. R546 contacts ATP. R605 contributes to the CoA binding site.

This sequence belongs to the ATP-dependent AMP-binding enzyme family.

The enzyme catalyses acetate + ATP + CoA = acetyl-CoA + AMP + diphosphate. This is Acetyl-coenzyme A synthetase 1 (ACS1) from Debaryomyces hansenii (strain ATCC 36239 / CBS 767 / BCRC 21394 / JCM 1990 / NBRC 0083 / IGC 2968) (Yeast).